The primary structure comprises 360 residues: 3-dehydroquinate synthase (360 aa).

NAD(+) contacts are provided by residues 69–74, 103–107, 127–128, lysine 140, lysine 149, and 167–170; these read DGEAYK, GVIGD, TT, and CLQT. Zn(2+)-binding residues include glutamate 182, histidine 245, and histidine 262.

This sequence belongs to the sugar phosphate cyclases superfamily. Dehydroquinate synthase family. Co(2+) serves as cofactor. Zn(2+) is required as a cofactor. The cofactor is NAD(+).

The protein localises to the cytoplasm. It catalyses the reaction 7-phospho-2-dehydro-3-deoxy-D-arabino-heptonate = 3-dehydroquinate + phosphate. It participates in metabolic intermediate biosynthesis; chorismate biosynthesis; chorismate from D-erythrose 4-phosphate and phosphoenolpyruvate: step 2/7. Its function is as follows. Catalyzes the conversion of 3-deoxy-D-arabino-heptulosonate 7-phosphate (DAHP) to dehydroquinate (DHQ). This is 3-dehydroquinate synthase from Aeromonas hydrophila subsp. hydrophila (strain ATCC 7966 / DSM 30187 / BCRC 13018 / CCUG 14551 / JCM 1027 / KCTC 2358 / NCIMB 9240 / NCTC 8049).